A 314-amino-acid polypeptide reads, in one-letter code: L-lactate dehydrogenase 1 (314 aa).

NAD(+) is bound by residues V16, D37, K42, Y68, and 82 to 83 (GL). Substrate is bound by residues Q85, R91, and 123 to 126 (NPVD). NAD(+)-binding positions include 121–123 (ATN) and S146. Residue 151-154 (DSAR) coordinates substrate. Residues R156 and H171 each coordinate beta-D-fructose 1,6-bisphosphate. H178 functions as the Proton acceptor in the catalytic mechanism. Residue Y223 is modified to Phosphotyrosine. Position 232 (T232) interacts with substrate.

This sequence belongs to the LDH/MDH superfamily. LDH family. As to quaternary structure, homotetramer.

The protein localises to the cytoplasm. It catalyses the reaction (S)-lactate + NAD(+) = pyruvate + NADH + H(+). It functions in the pathway fermentation; pyruvate fermentation to lactate; (S)-lactate from pyruvate: step 1/1. With respect to regulation, allosterically activated by fructose 1,6-bisphosphate (FBP). Its function is as follows. Catalyzes the conversion of lactate to pyruvate. The sequence is that of L-lactate dehydrogenase 1 from Bacillus cereus (strain ATCC 14579 / DSM 31 / CCUG 7414 / JCM 2152 / NBRC 15305 / NCIMB 9373 / NCTC 2599 / NRRL B-3711).